The chain runs to 1001 residues: Phosphoenolpyruvate carboxylase (1001 aa).

Residues H189 and K642 contribute to the active site.

This sequence belongs to the PEPCase type 1 family. It depends on Mg(2+) as a cofactor.

It catalyses the reaction oxaloacetate + phosphate = phosphoenolpyruvate + hydrogencarbonate. Forms oxaloacetate, a four-carbon dicarboxylic acid source for the tricarboxylic acid cycle. This Prochlorococcus marinus (strain SARG / CCMP1375 / SS120) protein is Phosphoenolpyruvate carboxylase.